A 64-amino-acid chain; its full sequence is MKSKFAVLFFTLFLLALAIDNVTTICPPGCICNRQSVGLTCKPSPGSDMSARECLKKTCSYGYC.

The N-terminal stretch at 1–18 is a signal peptide; the sequence is MKSKFAVLFFTLFLLALA.

It belongs to the scolopendra neurotoxin 6 family. In terms of processing, contains 3 disulfide bonds. As to expression, expressed by the venom gland.

Its subcellular location is the secreted. The protein is Putative neurotoxin 4 of Scolopendra mutilans (Chinese red-headed centipede).